A 197-amino-acid polypeptide reads, in one-letter code: Alkyl hydroperoxide reductase C (197 aa).

The region spanning 2–163 is the Thioredoxin domain; it reads VLVTQNAPNF…MIRMVDALDF (162 aa). C50 (cysteine sulfenic acid (-SOH) intermediate) is an active-site residue.

This sequence belongs to the peroxiredoxin family. AhpC/Prx1 subfamily. In terms of assembly, homodimer; disulfide-linked, upon oxidation. 5 homodimers assemble to form a ring-like decamer.

Its subcellular location is the cytoplasm. It catalyses the reaction a hydroperoxide + NADH + H(+) = an alcohol + NAD(+) + H2O. Functionally, thiol-specific peroxidase that catalyzes the reduction of hydrogen peroxide and organic hydroperoxides to water and alcohols, respectively. Plays a role in cell protection against oxidative stress by detoxifying peroxides. In Buchnera aphidicola subsp. Acyrthosiphon pisum (strain APS) (Acyrthosiphon pisum symbiotic bacterium), this protein is Alkyl hydroperoxide reductase C.